The chain runs to 234 residues: Lipoprotein-releasing system ATP-binding protein LolD 1 (234 aa).

Residues 5–231 enclose the ABC transporter domain; sequence IEARGIEKVF…RLTSNVRDPG (227 aa). Position 41-48 (41-48) interacts with ATP; the sequence is GASGSGKS.

It belongs to the ABC transporter superfamily. Lipoprotein translocase (TC 3.A.1.125) family. In terms of assembly, the complex is composed of two ATP-binding proteins (LolD) and two transmembrane proteins (LolC and LolE).

The protein localises to the cell inner membrane. Its function is as follows. Part of the ABC transporter complex LolCDE involved in the translocation of mature outer membrane-directed lipoproteins, from the inner membrane to the periplasmic chaperone, LolA. Responsible for the formation of the LolA-lipoprotein complex in an ATP-dependent manner. This chain is Lipoprotein-releasing system ATP-binding protein LolD 1, found in Caulobacter vibrioides (strain ATCC 19089 / CIP 103742 / CB 15) (Caulobacter crescentus).